Consider the following 150-residue polypeptide: Large ribosomal subunit protein bL9 (150 aa).

This sequence belongs to the bacterial ribosomal protein bL9 family.

Functionally, binds to the 23S rRNA. The protein is Large ribosomal subunit protein bL9 of Stenotrophomonas maltophilia (strain R551-3).